The chain runs to 189 residues: Interferon alpha-13 (189 aa).

Positions 1 to 23 are cleaved as a signal peptide; that stretch reads MARPCAFLMVLVVLSYWSACSLG. 2 cysteine pairs are disulfide-bonded: C24/C122 and C52/C162. N-linked (GlcNAc...) asparagine glycosylation is found at N94 and N101.

The protein belongs to the alpha/beta interferon family.

The protein localises to the secreted. Its function is as follows. Exhibits antiviral activity against Theiler's virus, Mengo virus and vesicular stomatitis virus. Interferons alpha stimulate the production of two enzymes: a protein kinase and an oligoadenylate synthetase. The sequence is that of Interferon alpha-13 (Ifna13) from Mus musculus (Mouse).